The sequence spans 162 residues: G/U mismatch-specific DNA glycosylase (162 aa).

This sequence belongs to the uracil-DNA glycosylase (UDG) superfamily. TDG/mug family. As to quaternary structure, binds DNA as a monomer.

It is found in the cytoplasm. It carries out the reaction Specifically hydrolyzes mismatched double-stranded DNA and polynucleotides, releasing free uracil.. Excises ethenocytosine and uracil, which can arise by alkylation or deamination of cytosine, respectively, from the corresponding mispairs with guanine in ds-DNA. It is capable of hydrolyzing the carbon-nitrogen bond between the sugar-phosphate backbone of the DNA and the mispaired base. The complementary strand guanine functions in substrate recognition. Required for DNA damage lesion repair in stationary-phase cells. In Serratia proteamaculans (strain 568), this protein is G/U mismatch-specific DNA glycosylase.